A 547-amino-acid chain; its full sequence is MFS-type transporter M6 (547 aa).

The interval 1–45 (MHRRRRDNLMTPAEMVASMKPPQSLSTEDDDGSRRDSESSADVLK) is disordered. The helical transmembrane segment at 81–101 (VLVVASFAAAISPFSTSTYYP) threads the bilayer. An N-linked (GlcNAc...) asparagine glycan is attached at N118. Residues 146-166 (PMFLVCFAIYFVANVGLALQN) form a helical membrane-spanning segment. N167 is a glycosylation site (N-linked (GlcNAc...) asparagine). 2 helical membrane passes run 206–226 (LIYATLGSTLGPFLGPVIGGL) and 236–256 (VFWFLLCMGTVFALLIFIFFG). N274 carries an N-linked (GlcNAc...) asparagine glycan. A run of 5 helical transmembrane segments spans residues 317–337 (FILSVSGGLLYAGYSSVTSVL), 347–367 (YDAVQVGLCYLPVGFGSLLAY), 407–427 (LGFVFPMILVCSVLLVAYGWQ), 432–452 (APLAPILVTMFLIAIILTGVM), and 469–489 (AVGAAMNLTRLLLGAGAVAVV). N-linked (GlcNAc...) asparagine glycosylation occurs at N493. Residues 496–516 (AGIGWTATVTAGLWVLMMPTL) traverse the membrane as a helical segment.

It belongs to the major facilitator superfamily. CAR1 family.

The protein resides in the membrane. Functionally, MFS-type transporter; part of the gene cluster that mediates the biosynthesis of squalestatin S1 (SQS1, also known as zaragozic acid A), a heavily oxidized fungal polyketide that offers potent cholesterol lowering activity by targeting squalene synthase (SS). The polypeptide is MFS-type transporter M6 (Phoma sp. (strain ATCC 20986 / MF5453)).